The chain runs to 175 residues: Rubredoxin-1 (175 aa).

2 consecutive Rubredoxin-like domains span residues 1-53 (MARY…FVLI) and 119-170 (FLKW…YVLY). Fe cation contacts are provided by Cys6, Cys9, Cys39, Cys42, Cys124, Cys127, Cys157, and Cys160.

The protein belongs to the rubredoxin family. The cofactor is Fe(3+).

The protein localises to the cytoplasm. It participates in hydrocarbon metabolism; alkane degradation. Involved in the hydrocarbon hydroxylating system, which transfers electrons from NADH to rubredoxin reductase and then through rubredoxin to alkane 1 monooxygenase. In Pseudomonas putida (Arthrobacter siderocapsulatus), this protein is Rubredoxin-1 (alkG).